Consider the following 281-residue polypeptide: Pantothenate synthetase (281 aa).

Residue 30–37 coordinates ATP; sequence MGNLHQGH. The active-site Proton donor is histidine 37. Glutamine 61 contacts (R)-pantoate. Glutamine 61 provides a ligand contact to beta-alanine. 149-152 lines the ATP pocket; it reads GNKD. Glutamine 155 serves as a coordination point for (R)-pantoate. ATP is bound by residues isoleucine 178 and 186–189; that span reads MSSR.

Belongs to the pantothenate synthetase family. Homodimer.

Its subcellular location is the cytoplasm. It catalyses the reaction (R)-pantoate + beta-alanine + ATP = (R)-pantothenate + AMP + diphosphate + H(+). Its pathway is cofactor biosynthesis; (R)-pantothenate biosynthesis; (R)-pantothenate from (R)-pantoate and beta-alanine: step 1/1. In terms of biological role, catalyzes the condensation of pantoate with beta-alanine in an ATP-dependent reaction via a pantoyl-adenylate intermediate. The chain is Pantothenate synthetase from Shewanella baltica (strain OS195).